A 624-amino-acid polypeptide reads, in one-letter code: Protein FAM234B (624 aa).

The tract at residues 1–91 (MATVLSRALK…GFPSEPLGGL (91 aa)) is disordered. The residue at position 16 (serine 16) is a Phosphoserine. A Phosphothreonine modification is found at threonine 26. Serine 30, serine 33, and serine 63 each carry phosphoserine. The helical transmembrane segment at 107-127 (VFLLTLVISMVLVLLCAFLIP) threads the bilayer.

Belongs to the FAM234 family.

It is found in the membrane. It localises to the golgi outpost. Its subcellular location is the cytoplasm. The protein localises to the cytoskeleton. The protein resides in the microtubule organizing center. The polypeptide is Protein FAM234B (Mus musculus (Mouse)).